Consider the following 406-residue polypeptide: ATP-dependent RNA helicase eIF4A (406 aa).

Residues 25-53 (DSFDAMDLKPELLRGVYAYGFERPSAIQQ) carry the Q motif motif. The 171-residue stretch at 56–226 (ILPIIKGNDV…TKFMRDPVRI (171 aa)) folds into the Helicase ATP-binding domain. 69–76 (AQSGTGKT) contacts ATP. Residues 174-177 (DEAD) carry the DEAD box motif. Residues 237 to 398 (GIKQFYIAVE…EMPMNVAGKF (162 aa)) enclose the Helicase C-terminal domain.

It belongs to the DEAD box helicase family. eIF4A subfamily. Component of the eIF4F complex, which composition varies with external and internal environmental conditions. It is composed of at least eIF4A, eIF4E and eIF4G.

It localises to the cytoplasm. It catalyses the reaction ATP + H2O = ADP + phosphate + H(+). Functionally, ATP-dependent RNA helicase which is a subunit of the eIF4F complex involved in cap recognition and is required for mRNA binding to ribosome. In the current model of translation initiation, eIF4A unwinds RNA secondary structures in the 5'-UTR of mRNAs which is necessary to allow efficient binding of the small ribosomal subunit, and subsequent scanning for the initiator codon. The chain is ATP-dependent RNA helicase eIF4A (tif1) from Aspergillus fumigatus (strain ATCC MYA-4609 / CBS 101355 / FGSC A1100 / Af293) (Neosartorya fumigata).